The following is a 216-amino-acid chain: Fucoxanthin-chlorophyll a-c binding protein C, chloroplastic (216 aa).

The N-terminal 38 residues, 1–38 (MKSAIMAVASAAPGLRGPSAFNGAALTTSAKSSSAMKM), are a transit peptide targeting the chloroplast. Transmembrane regions (helical) follow at residues 80-100 (IAMLAIAGHLTQQNARLPGML), 121-141 (IPPGGLAQIFGFIGFLELAVM), and 182-202 (GRAAQMGILALMVHEELNNKP).

The protein belongs to the fucoxanthin chlorophyll protein family. As to quaternary structure, the LHC complex of chromophytic algae is composed of fucoxanthin, chlorophyll A and C bound non-covalently by fucoxanthin chlorophyll proteins (FCPs). The ratio of pigments in this LHC is; fucoxanthin: chlorophyll C: chlorophyll A; (0.6-1): (0.1-0.3): (1).

The protein resides in the plastid. It localises to the chloroplast thylakoid membrane. Functionally, the light-harvesting complex (LHC) functions as a light receptor, it captures and delivers excitation energy to photosystems with which it is closely associated. Energy is transferred from the carotenoid and chlorophyll C (or B) to chlorophyll A and the photosynthetic reaction centers where it is used to synthesize ATP and reducing power. The polypeptide is Fucoxanthin-chlorophyll a-c binding protein C, chloroplastic (FCPC) (Macrocystis pyrifera (Giant kelp)).